Consider the following 467-residue polypeptide: Probable citrate synthase 1, mitochondrial (467 aa).

Residues His-303, His-349, and Asp-404 contribute to the active site.

The protein belongs to the citrate synthase family. As to quaternary structure, homodimer.

The protein resides in the mitochondrion matrix. It catalyses the reaction oxaloacetate + acetyl-CoA + H2O = citrate + CoA + H(+). It functions in the pathway carbohydrate metabolism; tricarboxylic acid cycle; isocitrate from oxaloacetate: step 1/2. This Aedes aegypti (Yellowfever mosquito) protein is Probable citrate synthase 1, mitochondrial.